Reading from the N-terminus, the 326-residue chain is Serpentine receptor class alpha-12 (326 aa).

The Extracellular segment spans residues 1 to 17 (MSCASEVQAQLFTHPVQ). Residues 18-38 (IIYACVQTVLFLATIIGSLLA) form a helical membrane-spanning segment. The Cytoplasmic portion of the chain corresponds to 39–54 (IVQLCKKTTIPDSTKV). Residues 55–75 (LLIGALFFANAHELAYFSSPF) form a helical membrane-spanning segment. Residues 76-101 (KVFKMNLFHTNTSCYPLASTLECIPT) are Extracellular-facing. Residues 102 to 122 (TTVLAMGISGNMLIQSALSIF) traverse the membrane as a helical segment. The Cytoplasmic portion of the chain corresponds to 123–138 (RLLATIFPVCYSRMRA). The chain crosses the membrane as a helical span at residues 139 to 159 (LPGVVLLFMVLIPSFLSYSWI). The Extracellular portion of the chain corresponds to 160–185 (RSDIVLDDYQMFCSQWSANISSRANT). A helical membrane pass occupies residues 186–206 (YLEYCSYLTVAHIIINALIIL). Residues 207 to 234 (RNRSVESKCRFDVQQRYLNSETLKTTQT) lie on the Cytoplasmic side of the membrane. A helical membrane pass occupies residues 235–255 (ICYLSIAQFLAMFLYSGGVLF). At 256-270 (MRKNQKNIPTLIYIN) the chain is on the extracellular side. Residues 271–291 (VIVWVYAPPYACVSLAPLILF) traverse the membrane as a helical segment. Topologically, residues 292–326 (SLWNLKKQRQIRIQSITVQKETQEDHIRKLQLSWG) are cytoplasmic.

It belongs to the nematode receptor-like protein sra family.

The protein localises to the membrane. This is Serpentine receptor class alpha-12 from Caenorhabditis briggsae.